A 108-amino-acid chain; its full sequence is Putative double-stranded DNA mimic protein PBPRA1522 (108 aa).

It belongs to the putative dsDNA mimic protein family.

May act as a double-stranded DNA (dsDNA) mimic. Probably regulates the activity of a dsDNA-binding protein. The protein is Putative double-stranded DNA mimic protein PBPRA1522 of Photobacterium profundum (strain SS9).